The chain runs to 197 residues: Female-specific protein transformer (197 aa).

2 stretches are compositionally biased toward basic and acidic residues: residues 1 to 17 and 24 to 39; these read MKMDADSSGTQHRDSRG and REREYHGRSSERDSRK. Disordered regions lie at residues 1 to 136 and 158 to 197; these read MKMD…PKII and GYQRLPRPPPFPPAPYRYRQRPPFIGVPRFGYRNAGRPPY. Basic residues-rich tracts occupy residues 58 to 75 and 84 to 127; these read RRLRQRAHQSTRRTRSRS and SRHR…RSPH. Residues 163-172 show a composition bias toward pro residues; the sequence is PRPPPFPPAP.

The protein resides in the nucleus speckle. Functionally, member of the regulatory pathway controlling female somatic sexual differentiation, regulated by Sxl. Activates dsx female-specific splicing by promoting the formation of a splicing enhancer complex which consists of tra, tra2 and sr proteins. Together with tra-2, plays a role in switching fru splicing from the male-specific pattern to the female-specific pattern through activation of the female-specific fru 5'-splice site. No known function in males. This chain is Female-specific protein transformer (tra), found in Drosophila melanogaster (Fruit fly).